Reading from the N-terminus, the 89-residue chain is Double-stranded DNA-binding protein (89 aa).

As to quaternary structure, homodimer.

May play a role in transcription of several T4 genes. Binds double-stranded DNA and interacts preferentially with T4 late promoter regions. This Enterobacteria phage T4 (Bacteriophage T4) protein is Double-stranded DNA-binding protein (dsbA).